The primary structure comprises 197 residues: CASP-like protein 1B2 (197 aa).

Residue Ala2 is modified to N-acetylalanine. The Cytoplasmic segment spans residues Ala2–Lys17. Residues Leu18–Ser38 form a helical membrane-spanning segment. Topologically, residues Leu39–Ala69 are extracellular. Residues Phe70–Leu90 traverse the membrane as a helical segment. The Cytoplasmic portion of the chain corresponds to Gln91 to Ser106. A helical transmembrane segment spans residues Ile107 to Phe127. At Val128–Ala156 the chain is on the extracellular side. The chain crosses the membrane as a helical span at residues Gly157–Ile177. The Cytoplasmic segment spans residues Ser178–Val197.

The protein belongs to the Casparian strip membrane proteins (CASP) family. Homodimer and heterodimers.

It localises to the cell membrane. This Arabidopsis lyrata subsp. lyrata (Lyre-leaved rock-cress) protein is CASP-like protein 1B2.